Reading from the N-terminus, the 392-residue chain is Protein O-glucosyltransferase 1 (392 aa).

Residues 1–23 form the signal peptide; the sequence is MERRAGSRLRAWMLLLLLCPVQG. 4 cysteine pairs are disulfide-bonded: C49–C56, C54–C357, C102–C108, and C263–C286. N-linked (GlcNAc...) asparagine glycosylation is present at N53. Residues 103–107 are interaction with the consensus sequence C-X-S-X-[PA]-C in peptide substrates; sequence MFPSR. Residue D133 is the Proton donor/acceptor of the active site. Residues 172 to 178 form an interaction with the consensus sequence C-X-S-X-[PA]-C in peptide substrates region; sequence AVWPLYP. Y177 contacts UDP-alpha-D-glucose. N-linked (GlcNAc...) asparagine glycosylation is present at N204. UDP-alpha-D-glucose-binding positions include S212, R218, and 274–279; that span reads VAASFR. N-linked (GlcNAc...) asparagine glycosylation occurs at N373. The short motif at 389-392 is the Prevents secretion from ER element; sequence KTEL.

It belongs to the glycosyltransferase 90 family. As to expression, widely expressed in newborn and adult tissues (at protein level).

The protein resides in the endoplasmic reticulum lumen. It catalyses the reaction L-seryl-[EGF-like domain protein] + UDP-alpha-D-xylose = 3-O-(beta-D-xylosyl)-L-seryl-[EGF-like domain protein] + UDP + H(+). The catalysed reaction is L-seryl-[EGF-like domain protein] + UDP-alpha-D-glucose = 3-O-(beta-D-glucosyl)-L-seryl-[EGF-like domain protein] + UDP + H(+). Its pathway is protein modification; protein glycosylation. Its function is as follows. Dual specificity glycosyltransferase that catalyzes the transfer of glucose and xylose from UDP-glucose and UDP-xylose, respectively, to a serine residue found in the consensus sequence of C-X-S-X-P-C. Specifically targets extracellular EGF repeats of protein such as CRB2, F7, F9 and NOTCH2. Acts as a positive regulator of Notch signaling by mediating O-glucosylation of Notch, leading to regulate muscle development. Notch glucosylation does not affect Notch ligand binding. Required during early development to promote gastrulation: acts by mediating O-glucosylation of CRB2, which is required for CRB2 localization to the cell membrane. This is Protein O-glucosyltransferase 1 from Mus musculus (Mouse).